Here is a 97-residue protein sequence, read N- to C-terminus: uncharacterized protein (97 aa).

This is an uncharacterized protein from Emericella nidulans (Aspergillus nidulans).